A 129-amino-acid polypeptide reads, in one-letter code: M-zodatoxin-Lt8h (129 aa).

Residues 1 to 20 (MKYFVVALALVAAFACIAES) form the signal peptide. Positions 21-60 (KPAESEHELAEVEEENELADLEDAVWLEDLADLSDLEETR) are excised as a propeptide.

Belongs to the cationic peptide 06 (cytoinsectotoxin) family. As to expression, expressed by the venom gland.

Its subcellular location is the secreted. Insecticidal, cytolytic and antimicrobial peptide. Has insecticidal activity against the flesh fly S.carnaria. Has antibacterial activity against the Gram-negative bacteria E.coli. Forms voltage-dependent, ion-permeable channels in membranes. At high concentration causes cell membrane lysis. The polypeptide is M-zodatoxin-Lt8h (cit 1-11) (Lachesana tarabaevi (Spider)).